Consider the following 244-residue polypeptide: Ureidoacrylate amidohydrolase RutB (244 aa).

The Proton acceptor role is filled by Asp38. The active site involves Lys147. Cys180 functions as the Nucleophile in the catalytic mechanism.

It belongs to the isochorismatase family. RutB subfamily.

It carries out the reaction (Z)-3-ureidoacrylate + H2O + H(+) = (Z)-3-aminoacrylate + NH4(+) + CO2. The enzyme catalyses (Z)-3-ureidoacrylate + H2O = (Z)-3-aminoacrylate + carbamate + H(+). The catalysed reaction is (Z)-2-methylureidoacrylate + H2O + H(+) = (Z)-2-methylaminoacrylate + NH4(+) + CO2. In terms of biological role, hydrolyzes ureidoacrylate to form aminoacrylate and carbamate. The carbamate hydrolyzes spontaneously, thereby releasing one of the nitrogen atoms of the pyrimidine ring as ammonia and one of its carbon atoms as CO2. In Escherichia coli O6:H1 (strain CFT073 / ATCC 700928 / UPEC), this protein is Ureidoacrylate amidohydrolase RutB.